Consider the following 170-residue polypeptide: Urease accessory protein UreE (170 aa).

The protein belongs to the UreE family.

The protein localises to the cytoplasm. Its function is as follows. Involved in urease metallocenter assembly. Binds nickel. Probably functions as a nickel donor during metallocenter assembly. The chain is Urease accessory protein UreE from Helicobacter pylori (strain ATCC 700392 / 26695) (Campylobacter pylori).